Here is a 382-residue protein sequence, read N- to C-terminus: Gap junction alpha-1 protein (382 aa).

Residues 2-23 (GDWSALGKLLDKVQAYSTAGGK) are Cytoplasmic-facing. Ser-5 carries the phosphoserine modification. Residues 24 to 44 (VWLSVLFIFRILLLGTAVESA) traverse the membrane as a helical segment. The Extracellular segment spans residues 45-76 (WGDEQSAFRCNTQQPGCENVCYDKSFPISHVR). 2 disulfide bridges follow: Cys-54/Cys-192 and Cys-187/Cys-198. The helical transmembrane segment at 77–97 (FWVLQIIFVSVPTLLYLAHVF) threads the bilayer. Residues 98–155 (YVMRKEEKLNKKEEELKVAQTDGVNVEMHLKQIEIKKFKYGIEEHGKVKMRGGLLRTY) are Cytoplasmic-facing. Residue Lys-144 forms a Glycyl lysine isopeptide (Lys-Gly) (interchain with G-Cter in SUMO) linkage. The helical transmembrane segment at 156–176 (IISILFKSVFEVAFLLIQWYI) threads the bilayer. Residues 177-207 (YGFSLSAVYTCKRDPCPHQVDCFLSRPTEKT) lie on the Extracellular side of the membrane. A helical transmembrane segment spans residues 208–228 (IFIIFMLVVSLVSLALNIIEL). Over 229–382 (FYVFFKGVKD…SRPRPDDLEI (154 aa)) the chain is Cytoplasmic. A Glycyl lysine isopeptide (Lys-Gly) (interchain with G-Cter in SUMO) cross-link involves residue Lys-237. The segment at 244-382 (SDPYHATTGP…SRPRPDDLEI (139 aa)) is interaction with NOV. Phosphotyrosine is present on Tyr-247. Phosphoserine is present on residues Ser-255, Ser-257, and Ser-262. Positions 264–382 (KYAYFNGCSS…SRPRPDDLEI (119 aa)) are interaction with UBQLN4. At Cys-271 the chain carries S-nitrosocysteine. Position 275 is a phosphothreonine (Thr-275). 3 positions are modified to phosphoserine: Ser-306, Ser-314, and Ser-325. Polar residues predominate over residues 317–332 (QNRMGQAGSTISNSHA). The tract at residues 317–382 (QNRMGQAGST…SRPRPDDLEI (66 aa)) is disordered. Phosphothreonine is present on Thr-326. Residues Ser-328, Ser-330, and Ser-365 each carry the phosphoserine modification. The span at 362–374 (RPSSRASSRASSR) shows a compositional bias: low complexity. Residue Ser-368 is modified to Phosphoserine; by PKC/PRKCG and PKC/PRKCD. Ser-369 and Ser-373 each carry phosphoserine.

It belongs to the connexin family. Alpha-type (group II) subfamily. In terms of assembly, a connexon is composed of a hexamer of connexins. Interacts with SGSM3. Interacts with RIC1/CIP150. Interacts with CNST and CSNK1D. Interacts (via C-terminus) with TJP1. Interacts (via C-terminus) with SRC (via SH3 domain). Interacts (not ubiquitinated) with UBQLN4 (via UBA domain). Interacts with NOV. Interacts with TMEM65. Interacts with ANK3/ANKG and PKP2. Contains at least one intramolecular disulfide bond. In terms of processing, phosphorylation at Ser-325, Ser-328 and Ser-330 by CK1 modulates gap junction assembly. Phosphorylated at Ser-368 by PRKCG; phosphorylation induces disassembly of gap junction plaques and inhibition of gap junction activity. Phosphorylation at Ser-368 by PRKCD triggers its internalization into small vesicles leading to proteasome-mediated degradation. Post-translationally, sumoylated with SUMO1, SUMO2 and SUMO3, which may regulate the level of functional Cx43 gap junctions at the plasma membrane. May be desumoylated by SENP1 or SENP2. S-nitrosylation at Cys-271 is enriched at the muscle endothelial gap junction in arteries, it augments channel permeability and may regulate of smooth muscle cell to endothelial cell communication. In terms of processing, acetylated in the developing cortex; leading to delocalization from the cell membrane. Detected in ventricle and atrium (at protein level).

The protein localises to the cell membrane. The protein resides in the cell junction. Its subcellular location is the gap junction. It is found in the endoplasmic reticulum. Functionally, gap junction protein that acts as a regulator of bladder capacity. A gap junction consists of a cluster of closely packed pairs of transmembrane channels, the connexons, through which materials of low MW diffuse from one cell to a neighboring cell. Negative regulator of bladder functional capacity: acts by enhancing intercellular electrical and chemical transmission, thus sensitizing bladder muscles to cholinergic neural stimuli and causing them to contract. May play a role in cell growth inhibition through the regulation of NOV expression and localization. Plays an essential role in gap junction communication in the ventricles. The protein is Gap junction alpha-1 protein (Gja1) of Rattus norvegicus (Rat).